Consider the following 327-residue polypeptide: Complex I intermediate-associated protein 30, mitochondrial (327 aa).

The transit peptide at 1-24 directs the protein to the mitochondrion; that stretch reads MALVHKLLRGTYILRKFSKPASAL. A disordered region spans residues 42-63; the sequence is PVASPGKASSQRKTEGDLQGDH. The segment covering 53–63 has biased composition (basic and acidic residues); sequence RKTEGDLQGDH. Residue S318 is modified to Phosphoserine.

The protein belongs to the CIA30 family. Part of the mitochondrial complex I assembly/MCIA complex that comprises at least the core subunits TMEM126B, NDUFAF1, ECSIT and ACAD9 and complement subunits such as COA1 and TMEM186. Interacts with ECSIT. Interacts with ACAD9. At early stages of complex I assembly, it is found in intermediate subcomplexes that contain different subunits including NDUFB6, NDUFA6, NDUFA9, NDUFS3, NDUFS7, ND1, ND2 and ND3. Interacts with TMEM70 and TMEM242.

Its subcellular location is the mitochondrion. It localises to the mitochondrion matrix. Its function is as follows. As part of the MCIA complex, involved in the assembly of the mitochondrial complex I. This Pongo pygmaeus (Bornean orangutan) protein is Complex I intermediate-associated protein 30, mitochondrial.